The chain runs to 400 residues: MSMLNKKTIEDIDVCGKKVLVRCDFNVPLQDGVITDENRLNGALPTIQYLISKGAKVILCSHLGKPKGEAKPELSLAPVAKRLSEMLGKEVVFAADDNVVGENAKKATEKMENGDVVLLENTRYRKEETKNEENFSKELASLAEIFVNDAFGTAHRAHCSTVGAGEFLQERVCGYLIQKELKFLGEAVANPVRPFTAILGGAKVSDKLAVINELLEKVDNLIIGGGMAYTFLKAQGYEVGTSLLEIDKVEYAKEMMEKAKNKGVNLLLPVDVVMADHFAPDATPIVTEDANVKEDYMGLDMGPKTIANFVKTIKESKTVVWNGPMGVFEFENFANGTLSVARAMAELTDATTVIGGGDSAAAVNQLGFGDKMTHVSTGGGASLEFLEGKELPGIAALDNK.

Residues aspartate 24–asparagine 26, arginine 39, histidine 62–lysine 65, arginine 123, and arginine 156 contribute to the substrate site. ATP is bound by residues lysine 207, glycine 298, glutamate 329, and glycine 356–serine 359.

It belongs to the phosphoglycerate kinase family. In terms of assembly, monomer.

The protein resides in the cytoplasm. The catalysed reaction is (2R)-3-phosphoglycerate + ATP = (2R)-3-phospho-glyceroyl phosphate + ADP. The protein operates within carbohydrate degradation; glycolysis; pyruvate from D-glyceraldehyde 3-phosphate: step 2/5. In Clostridioides difficile (strain 630) (Peptoclostridium difficile), this protein is Phosphoglycerate kinase.